The following is a 332-amino-acid chain: L-lactate dehydrogenase A chain (332 aa).

NAD(+) is bound by residues 29–57 and arginine 99; that span reads GAVG…VEDK. Substrate is bound by residues arginine 106, asparagine 138, and arginine 169. Asparagine 138 is a binding site for NAD(+). The Proton acceptor role is filled by histidine 193. A substrate-binding site is contributed by threonine 248.

The protein belongs to the LDH/MDH superfamily. LDH family. As to quaternary structure, homotetramer.

The protein resides in the cytoplasm. The enzyme catalyses (S)-lactate + NAD(+) = pyruvate + NADH + H(+). It functions in the pathway fermentation; pyruvate fermentation to lactate; (S)-lactate from pyruvate: step 1/1. In terms of biological role, interconverts simultaneously and stereospecifically pyruvate and lactate with concomitant interconversion of NADH and NAD(+). In Alligator mississippiensis (American alligator), this protein is L-lactate dehydrogenase A chain (LDHA).